The following is a 445-amino-acid chain: 3-phosphoshikimate 1-carboxyvinyltransferase (445 aa).

3-phosphoshikimate is bound by residues Lys-28, Ser-29, and Arg-33. Lys-28 serves as a coordination point for phosphoenolpyruvate. Positions 101 and 129 each coordinate phosphoenolpyruvate. 3-phosphoshikimate-binding residues include Ser-175, Gln-177, Asp-328, and Lys-355. Residue Gln-177 participates in phosphoenolpyruvate binding. Asp-328 serves as the catalytic Proton acceptor. Phosphoenolpyruvate is bound by residues Arg-359 and Arg-402.

It belongs to the EPSP synthase family. As to quaternary structure, monomer.

Its subcellular location is the cytoplasm. The enzyme catalyses 3-phosphoshikimate + phosphoenolpyruvate = 5-O-(1-carboxyvinyl)-3-phosphoshikimate + phosphate. It functions in the pathway metabolic intermediate biosynthesis; chorismate biosynthesis; chorismate from D-erythrose 4-phosphate and phosphoenolpyruvate: step 6/7. Functionally, catalyzes the transfer of the enolpyruvyl moiety of phosphoenolpyruvate (PEP) to the 5-hydroxyl of shikimate-3-phosphate (S3P) to produce enolpyruvyl shikimate-3-phosphate and inorganic phosphate. The chain is 3-phosphoshikimate 1-carboxyvinyltransferase from Bradyrhizobium sp. (strain BTAi1 / ATCC BAA-1182).